The sequence spans 1905 residues: MVEVYFIDHGNTEMVDWYNVKKLPAELREMPGLAIHCCVADICPLGVRWSPEAILAFKIAVVDKKLIIYVVSKELHKYIIEVLDNSRIEQRSMAKILSAAGHAKYEEVEPVAQHTGNMSDIDNETQQQFLGYINKDTSSLKTQQKEDVCSMEDDNSVPYSPYEDQFFEPGATIEVVVSCIISPGLFWCQNASLSSKLEKLMAKIQDYCSSTDCPYERGAYACLAKSSCDGKWYRAFITNNRPGSKANANQVEVLYVDYGITETVLVKDLRCIESELFDLKAQAFRCSLYNLIAPDSENPFEWDTKATLSFHRFVDSSAKKCSEFKCTFFATALVKTELSYIVDVFTPFASICKLLVELGHAKQLSHTTLAPSVQLQTYYYSMHDIKIGGEEEVYITYVNSSLEFYCQLSRNTETIDMIASATARVCSEVRKFELSVTPGPLCLAKFSDQQWYRCFINTNKNSTDAFFVDYGNTEKVNKEEMLPIPSDAYELLHFPMQAIKCSLSDMPDTVPSDVVLWFENHVLEKPLRAIIVAKETDGKLIVELYDGSQQINSILKTKLGWKSSRAEGSFGNSEKRNQLNDLDRGGRKETTSKFQPYSQGSKFSPDLDGHSQNGLTYQKPEFQTKEREQFEQKPNLRTPRSYNNDREVYQVQKNMSQSGFAPQKTGGFRSKDREAFEQRPNLKASGLYSQGRETPSMSQNSSYSGFPPQKTGAFRSKERQVSEHKQNSNPPKFYNQERKLSPQLRKASQNGSSSQTEAFWSSGSDQSSEHKPDNASQQRRSTFQESKLTPPLSKLSDLPKQNIALGMKSSVYVAHTNTISDFYVHIAQNTDLSNISEILNNEKGPSDQLDEKYVNLGDLICAFYEDGLYYRAVITEKCADGLLAQYIDYGNTSVIPPTKIYKLPPSLLSIPAMSICCALDKCTTSACEQNMDDLMLKFSERTGDLELSCEFVQYNNRKWNVILCDDQGCINDLFISVSGDPMLNPPLPKEPSVTSETLISASLFVWNLPELGETVEAFASAVDSPEHFWCQLATANVDSLAVKVQEAGEHSIHDGRFSAEIEVGSPCNVIYSDDNYWYRAAVTKMKDDKVTVRFVDYGNEETLQMEQVRRLPADIAAIPVQAFPCSLANFNLSEGCWSSEANTFFYDKVTEGLLEITVLHIQELGLCKIPQASVNVKYNGEDINCEMRRFWQDSFVNTNPFTESLNAKEETAIEDNVIPSQADEDDHSEPSEEPCASESIETPAVDGEVLTANDETKLEALPVSSAEEAAEITDNTDVELMRTEYLLHEVQKSSDLSCLELTLDEDVPDEKNSGTPAVTPLAAEDLCIDYDESNIKKSYSGVTTEMDNRELHQDEDLDLWTSAAQDQEIASSEILGDVPIDKECNYSVEEATDQSCTNIGLEEGPEPVENAFTENINDETDIANVQSKGEEEEAYLVPEESTVAECEIEDFEPEVDLQSKENEGLPDIPLLEGDGDDSVSPEEVSSHEMNEAEGLEDQDQELLGYTGTERAMDDYEVLQSEEQAEDLVPEEDPGTETEHRSYLFEAEEADLPSQEHKDFPEQEEDRVAEHKNDISEPDLQSKEQKEDLVPEEDPGTETEHRSYLFEAEETDLPSQEHKDTVTYTDIPLLEGGVDDFGSKETVSIDYNYEYVTEDVEDLDTENQESQICISGSDNRSKESGPVDLQDFEDEVLFQYTEPTADSASDVRQGDECEFAAHSDENIESPEHPVHTDSTADVCETDVCEPEVADHCHLQDKVVSERTECPVPDDRTKDDHQNNECQCAVDPVENIECQTPVCLVAADRSYTEYTWTVSETESGNMKNIEFQESPAEGDSVGSHGVGATEWKDGEPESLVNPDTPLLEGPVSVDIMHSSDNFEPETDDMEQMEQDQGRMKIESSYVPAPSV.

Tudor domains lie at 1-30, 215-279, and 435-491; these read MVEVYFIDHGNTEMVDWYNVKKLPAELREM, YERG…LFDL, and SVTP…AYEL. A disordered region spans residues 564-795; sequence SRAEGSFGNS…SKLTPPLSKL (232 aa). Basic and acidic residues predominate over residues 573-591; sequence SEKRNQLNDLDRGGRKETT. Residues 592 to 602 are compositionally biased toward polar residues; sequence SKFQPYSQGSK. Basic and acidic residues predominate over residues 622–631; sequence FQTKEREQFE. 2 stretches are compositionally biased toward polar residues: residues 651–660 and 687–704; these read VQKNMSQSGF and LYSQGRETPSMSQNSSYS. The segment covering 715–726 has biased composition (basic and acidic residues); sequence RSKERQVSEHKQ. 2 stretches are compositionally biased toward polar residues: residues 746 to 766 and 774 to 787; these read KASQNGSSSQTEAFWSSGSDQ and NASQQRRSTFQESK. Tudor domains are found at residues 853–910 and 1060–1118; these read YVNL…LLSI and EIEV…IAAI. Disordered stretches follow at residues 1213–1245, 1449–1599, 1655–1682, and 1827–1905; these read IEDNVIPSQADEDDHSEPSEEPCASESIETPAV, EDFE…TETE, VEDLDTENQESQICISGSDNRSKESGPV, and ESPA…APSV. Acidic residues-rich tracts occupy residues 1491–1500 and 1522–1535; these read EAEGLEDQDQ and EQAEDLVPEEDPGT. Basic and acidic residues predominate over residues 1553-1588; that stretch reads SQEHKDFPEQEEDRVAEHKNDISEPDLQSKEQKEDL. The span at 1663 to 1673 shows a compositional bias: polar residues; sequence QESQICISGSD. The segment covering 1876 to 1887 has biased composition (acidic residues); the sequence is FEPETDDMEQME.

As to quaternary structure, interacts with FRGY2 (a component of messenger ribonucleoprotein (mRNP) particle) during germ cell development. As to expression, expressed in testis.

The protein localises to the cytoplasm. Tudor domain-containing protein involved in germ cell development, more specifically the formation of chromatoid body (during spermiogenesis), Balbiani body (during oogenesis), germ plasm (upon fertilization), and for proper miRNA expression and spliceosome maturation. Component of cytoplasmic mRNP particle through interaction with FRGY2, and binds to maternal mRNA related to cell cycle (RCC1, RHAMM, INCENP-A, MAD2L1, HELLS) and a germ plasm specific mRNA (Dead end/Dnd1), it is proposed a role in translational activation of the maternal mRNAs repressed in mRNP particle. This is Tudor domain-containing 6-like from Xenopus laevis (African clawed frog).